The following is a 259-amino-acid chain: Thiazole synthase (259 aa).

The active-site Schiff-base intermediate with DXP is K98. Residues G159, 185–186 (AG), and 207–208 (NS) contribute to the 1-deoxy-D-xylulose 5-phosphate site.

This sequence belongs to the ThiG family. In terms of assembly, homotetramer. Forms heterodimers with either ThiH or ThiS.

Its subcellular location is the cytoplasm. The enzyme catalyses [ThiS sulfur-carrier protein]-C-terminal-Gly-aminoethanethioate + 2-iminoacetate + 1-deoxy-D-xylulose 5-phosphate = [ThiS sulfur-carrier protein]-C-terminal Gly-Gly + 2-[(2R,5Z)-2-carboxy-4-methylthiazol-5(2H)-ylidene]ethyl phosphate + 2 H2O + H(+). Its pathway is cofactor biosynthesis; thiamine diphosphate biosynthesis. In terms of biological role, catalyzes the rearrangement of 1-deoxy-D-xylulose 5-phosphate (DXP) to produce the thiazole phosphate moiety of thiamine. Sulfur is provided by the thiocarboxylate moiety of the carrier protein ThiS. In vitro, sulfur can be provided by H(2)S. The chain is Thiazole synthase from Chlorobaculum tepidum (strain ATCC 49652 / DSM 12025 / NBRC 103806 / TLS) (Chlorobium tepidum).